We begin with the raw amino-acid sequence, 344 residues long: UDP-3-O-acylglucosamine N-acyltransferase (344 aa).

Histidine 248 acts as the Proton acceptor in catalysis.

It belongs to the transferase hexapeptide repeat family. LpxD subfamily. As to quaternary structure, homotrimer.

The enzyme catalyses a UDP-3-O-[(3R)-3-hydroxyacyl]-alpha-D-glucosamine + a (3R)-hydroxyacyl-[ACP] = a UDP-2-N,3-O-bis[(3R)-3-hydroxyacyl]-alpha-D-glucosamine + holo-[ACP] + H(+). The protein operates within bacterial outer membrane biogenesis; LPS lipid A biosynthesis. Functionally, catalyzes the N-acylation of UDP-3-O-acylglucosamine using 3-hydroxyacyl-ACP as the acyl donor. Is involved in the biosynthesis of lipid A, a phosphorylated glycolipid that anchors the lipopolysaccharide to the outer membrane of the cell. This is UDP-3-O-acylglucosamine N-acyltransferase from Synechocystis sp. (strain ATCC 27184 / PCC 6803 / Kazusa).